The chain runs to 474 residues: Selection and upkeep of intraepithelial T-cells protein 4 (474 aa).

The signal sequence occupies residues 1–25 (MGATEVLTSYCVVLCLLQMVALSSG). The Extracellular portion of the chain corresponds to 26–241 (HFTVIGSQRP…VLSGELFSWK (216 aa)). The 114-residue stretch at 27–140 (FTVIGSQRPI…EEHITEVKVT (114 aa)) folds into the Ig-like V-type domain. Cystine bridges form between Cys-48-Cys-122 and Cys-162-Cys-216. N-linked (GlcNAc...) asparagine glycosylation is found at Asn-111 and Asn-199. The 94-residue stretch at 141–234 (ATSSDIQILM…QEQSINIVLS (94 aa)) folds into the Ig-like C1-type domain. Residues 242 to 262 (IVWIMILSTISFVMIDFCMTY) traverse the membrane as a helical segment. Topologically, residues 263–298 (CVQQQLIHEESLSTVDNDQCESDQSEGTCYKRNYPW) are cytoplasmic. A helical membrane pass occupies residues 299–319 (IIIAVVPIISVFAIIGVMLFL). The Extracellular portion of the chain corresponds to 320 to 341 (HLEQRVTILEQHFELDTLWLED). The helical transmembrane segment at 342 to 362 (ISVILCVVIVSNINLIPLIYF) threads the bilayer. The Cytoplasmic segment spans residues 363 to 381 (RLHEHVPRFKDRSPILNKA). Residues 382–402 (VVFLHFIYFSIVCGTILLVHL) traverse the membrane as a helical segment. The Extracellular segment spans residues 403–420 (QLRNKVSISDSLFSLYNS). A helical transmembrane segment spans residues 421–441 (WLTDISMILGFLLSIFIVTTI). The Cytoplasmic segment spans residues 442 to 474 (AKSSLFNKKWCIGLCIHMKEAEATGGPCEGEEL).

Belongs to the SKINT family. Expressed in skin, thymus and, to a lower extent, bladder and testis.

The protein resides in the membrane. Functionally, may act by engaging a cell surface molecule on immature T-cells in the embryonic thymus. This chain is Selection and upkeep of intraepithelial T-cells protein 4 (Skint4), found in Mus musculus (Mouse).